The following is a 252-amino-acid chain: Putative cytosolic acyl coenzyme A thioester hydrolase-like (252 aa).

2 consecutive HotDog ACOT-type domains span residues 1–90 (MIKE…LSLT) and 146–252 (SYSQ…SVFT).

Homodimer. Expressed in all tissues examined. Up-regulated in nasopharyngeal carcinoma (at protein level).

Its subcellular location is the cytoplasm. It catalyses the reaction hexadecanoyl-CoA + H2O = hexadecanoate + CoA + H(+). Acyl-CoA thioesterases are a group of enzymes that catalyze the hydrolysis of acyl-CoAs to the free fatty acid and coenzyme A (CoASH), providing the potential to regulate intracellular levels of acyl-CoAs, free fatty acids and CoASH. The sequence is that of Putative cytosolic acyl coenzyme A thioester hydrolase-like (ACOT7L) from Homo sapiens (Human).